The following is a 361-amino-acid chain: Tetraacyldisaccharide 4'-kinase (361 aa).

68–75 (TVGGTGKT) is a binding site for ATP.

This sequence belongs to the LpxK family.

It carries out the reaction a lipid A disaccharide + ATP = a lipid IVA + ADP + H(+). It participates in glycolipid biosynthesis; lipid IV(A) biosynthesis; lipid IV(A) from (3R)-3-hydroxytetradecanoyl-[acyl-carrier-protein] and UDP-N-acetyl-alpha-D-glucosamine: step 6/6. Functionally, transfers the gamma-phosphate of ATP to the 4'-position of a tetraacyldisaccharide 1-phosphate intermediate (termed DS-1-P) to form tetraacyldisaccharide 1,4'-bis-phosphate (lipid IVA). In Pelobacter propionicus (strain DSM 2379 / NBRC 103807 / OttBd1), this protein is Tetraacyldisaccharide 4'-kinase.